We begin with the raw amino-acid sequence, 129 residues long: Serum amyloid A-2 protein (129 aa).

The N-terminal stretch at 1–18 (MKLFTGLIFCSLVLGVSS) is a signal peptide. Position 19 is a pyrrolidone carboxylic acid (glutamine 19). The interval 92 to 129 (GDSGHGVEDSKADQAANEWGRSGKDPNHFRPSGLPDKY) is disordered.

Belongs to the SAA family. In terms of assembly, apolipoprotein of the HDL complex. Expressed by the liver; secreted in plasma.

Its subcellular location is the secreted. Its function is as follows. Major acute phase reactant. The chain is Serum amyloid A-2 protein (SAA2P0DJI9) from Neovison vison (American mink).